The chain runs to 503 residues: Maturase K (503 aa).

The protein belongs to the intron maturase 2 family. MatK subfamily.

It is found in the plastid. Its subcellular location is the chloroplast. Functionally, usually encoded in the trnK tRNA gene intron. Probably assists in splicing its own and other chloroplast group II introns. The sequence is that of Maturase K from Syzygium anisatum (Aniseed myrtle).